The sequence spans 842 residues: DNA mismatch repair protein MutS (842 aa).

Residue 596-603 (GPNMSGKS) participates in ATP binding.

It belongs to the DNA mismatch repair MutS family.

Its function is as follows. This protein is involved in the repair of mismatches in DNA. It is possible that it carries out the mismatch recognition step. This protein has a weak ATPase activity. This is DNA mismatch repair protein MutS from Exiguobacterium sp. (strain ATCC BAA-1283 / AT1b).